Reading from the N-terminus, the 297-residue chain is ER membrane protein complex subunit 2-B (297 aa).

TPR repeat units lie at residues 87-120 (HRVK…DPTN), 155-188 (QEAW…NPHN), and 192-225 (YQQF…NNHS).

Belongs to the EMC2 family. Component of the ER membrane protein complex (EMC).

It is found in the endoplasmic reticulum membrane. In terms of biological role, part of the endoplasmic reticulum membrane protein complex (EMC) that enables the energy-independent insertion into endoplasmic reticulum membranes of newly synthesized membrane proteins. Preferentially accommodates proteins with transmembrane domains that are weakly hydrophobic or contain destabilizing features such as charged and aromatic residues. Involved in the cotranslational insertion of multi-pass membrane proteins in which stop-transfer membrane-anchor sequences become ER membrane spanning helices. It is also required for the post-translational insertion of tail-anchored/TA proteins in endoplasmic reticulum membranes. By mediating the proper cotranslational insertion of N-terminal transmembrane domains in an N-exo topology, with translocated N-terminus in the lumen of the ER, controls the topology of multi-pass membrane proteins. By regulating the insertion of various proteins in membranes, it is indirectly involved in many cellular processes. The sequence is that of ER membrane protein complex subunit 2-B (emc2-b) from Xenopus laevis (African clawed frog).